Consider the following 1841-residue polypeptide: Sodium channel protein type 4 subunit alpha (1841 aa).

At 1 to 131 (MASSSLPTLV…RVAIKVLIHA (131 aa)) the chain is on the cytoplasmic side. A compositionally biased stretch (basic and acidic residues) spans 32–60 (AMEEEARLQRNKQMEIEEPERKPRSDLEA). Residues 32–63 (AMEEEARLQRNKQMEIEEPERKPRSDLEAGKN) are disordered. An I repeat occupies 113–448 (MLSPFSIVRR…VVAMAYAEQN (336 aa)). Residues 132–150 (LFSMFIMITILTNCVFMTM) traverse the membrane as a helical segment. The Extracellular portion of the chain corresponds to 151 to 157 (SNPPSWS). Residues 158-178 (KDVEYTFTGIYTFESLIKMLA) traverse the membrane as a helical segment. The Cytoplasmic segment spans residues 179-192 (RGFCIDDFTFLRDP). A helical transmembrane segment spans residues 193-210 (WNWLDFSVITMAYVTEFV). Residues 211–216 (DLGNIS) are Extracellular-facing. A glycan (N-linked (GlcNAc...) asparagine) is linked at N214. Residues 217-233 (ALRTFRVLRALKTITVI) traverse the membrane as a helical segment. Over 234–252 (PGLKTIVGALIQSVKKLSD) the chain is Cytoplasmic. A helical membrane pass occupies residues 253–272 (VMILTVFCLSVFALVGLQLF). The Extracellular portion of the chain corresponds to 273-385 (MGNLRQKCVR…PNYGYTSYDT (113 aa)). C280 and C354 are oxidised to a cystine. N288, N291, N297, N303, N315, N327, and N356 each carry an N-linked (GlcNAc...) asparagine glycan. A disulfide bridge connects residues C363 and C369. Residues 386–410 (FSWAFLALFRLMTQDYWENLFQLTL) constitute an intramembrane region (pore-forming). Residues 411 to 417 (RAAGKTY) lie on the Extracellular side of the membrane. A helical membrane pass occupies residues 418-438 (MIFFVVIIFLGSFYLINLILA). Residues 439–572 (VVAMAYAEQN…HIILLIVMDP (134 aa)) lie on the Cytoplasmic side of the membrane. A disordered region spans residues 484–522 (ALEGGEEADGDPTHSKDCNGSLDTSGEKGPPRPSCSAES). The II repeat unit spans residues 554–826 (CCAPWVKFKH…QIAIGRIKWG (273 aa)). Residues 573 to 591 (FVDLGITICIVLNTLFMAM) form a helical membrane-spanning segment. Over 592–602 (EHYPMTEHFDN) the chain is Extracellular. A helical membrane pass occupies residues 603–622 (VLSVGNLVFTGIFTAEMVLK). Topologically, residues 623–636 (LIAMDPYEYFQQGW) are cytoplasmic. The helical transmembrane segment at 637 to 656 (NIFDSFIVTLSLVELGLANV) threads the bilayer. Topologically, residues 657-658 (QG) are extracellular. The chain crosses the membrane as a helical span at residues 659–676 (LSVLRSFRLLRVFKLAKS). The Cytoplasmic portion of the chain corresponds to 677–692 (WPTLNMLIKIIGNSVG). A helical membrane pass occupies residues 693 to 711 (ALGNLTLVLAIIVFIFAVV). Residues 712 to 740 (GMQLFGKSYKECVCKIASDCSLPRWHMHD) are Extracellular-facing. C725 and C731 are disulfide-bonded. The pore-forming intramembrane region spans 741–761 (FFHSFLIVFRILCGEWIETMW). The Extracellular portion of the chain corresponds to 762–772 (DCMEVAGQAMC). A disulfide bond links C763 and C772. Residues 773 to 791 (LTVFLMVMVIGNLVVLNLF) traverse the membrane as a helical segment. Residues 792–1026 (LALLLSSFSA…ACFKIVEHNW (235 aa)) lie on the Cytoplasmic side of the membrane. Disordered stretches follow at residues 854 to 896 (EPGG…LTDG) and 925 to 983 (SDLE…EGEL). Residues 867–887 (EDEKKEPPPEDGNKELKDNHI) show a composition bias toward basic and acidic residues. Composition is skewed to acidic residues over residues 925-941 (SDLE…FSEP) and 969-983 (EDPE…EGEL). The stretch at 1007-1320 (RGKMWWTLRR…KKYYNAMKKL (314 aa)) is one III repeat. The helical transmembrane segment at 1027 to 1044 (FETFIVFMILLSSGALAF) threads the bilayer. Residues 1045–1057 (EDIYIEQRRVIRT) are Extracellular-facing. The chain crosses the membrane as a helical span at residues 1058–1076 (ILEYADKVFTYIFILEMLL). Topologically, residues 1077–1090 (KWVAYGFKVYFTNA) are cytoplasmic. A helical membrane pass occupies residues 1091 to 1109 (WCWLDFLIVDVSIISLVAN). Topologically, residues 1110–1117 (WLGYSELG) are extracellular. Residues 1118 to 1136 (PIKSLRTLRALRPLRALSR) form a helical membrane-spanning segment. Topologically, residues 1137 to 1153 (FEGMRVVVNALLGAIPS) are cytoplasmic. Residues 1154-1173 (IMNVLLVCLIFWLIFSIMGV) traverse the membrane as a helical segment. Over 1174–1224 (NLFAGKFYYCINTTTSERFDISVVNNKSECESLMYTGQVRWMNVKVNYDNV) the chain is Extracellular. C1183 and C1203 are joined by a disulfide. N1185 and N1199 each carry an N-linked (GlcNAc...) asparagine glycan. The pore-forming intramembrane region spans 1225 to 1246 (GLGYLSLLQVATFKGWMDIMYA). Residues 1247–1263 (AVDSREKEEQPDYEVNL) lie on the Extracellular side of the membrane. Residues 1264–1285 (YMYLYFVIFIIFGSFFTLNLFI) traverse the membrane as a helical segment. The Cytoplasmic segment spans residues 1286 to 1348 (GVIIDNFNQQ…MVYDFVTKQV (63 aa)). An important for rapid channel inactivation region spans residues 1304-1306 (IFM). Residues 1329–1627 (IPRPQNKIQG…WEKFDPDATQ (299 aa)) form an IV repeat. The chain crosses the membrane as a helical span at residues 1349 to 1366 (FDISIMILICLNMVTMMV). Residues 1367–1377 (ETDDQSQLKVD) lie on the Extracellular side of the membrane. The chain crosses the membrane as a helical span at residues 1378–1396 (ILYNINMVFIIVFTGECVL). Residues 1397–1408 (KMFALRHYYFTI) lie on the Cytoplasmic side of the membrane. The chain crosses the membrane as a helical span at residues 1409–1426 (GWNIFDFVVVILSIVGLA). Topologically, residues 1427-1439 (LSDLIQKYFVSPT) are extracellular. The helical transmembrane segment at 1440-1456 (LFRVIRLARIGRVLRLI) threads the bilayer. Residues 1457 to 1475 (RGAKGIRTLLFALMMSLPA) lie on the Cytoplasmic side of the membrane. A helical membrane pass occupies residues 1476 to 1493 (LFNIGLLLFLVMFIYSIF). At 1494 to 1515 (GMSNFAYVKKESGIDDMFNFET) the chain is on the extracellular side. The segment at residues 1516 to 1538 (FGNSIICLFEITTSAGWDGLLNP) is an intramembrane region (pore-forming). The Extracellular segment spans residues 1539–1568 (ILNSGPPDCDPTLENPGTNIKGDCGNPSIG). Residues C1547 and C1562 are joined by a disulfide bond. A helical membrane pass occupies residues 1569 to 1591 (ICFFCSYIIISFLIVVNMYIAII). Residues 1592-1841 (LENFNVATEE…VRPGVKESLV (250 aa)) lie on the Cytoplasmic side of the membrane. One can recognise an IQ domain in the interval 1721-1750 (EEVCAIKIQRAYRRHLLQRSVKQASYMYRH). Residues 1776-1794 (SEKEDNGVQSQGEKEKDST) show a composition bias toward basic and acidic residues. The tract at residues 1776-1841 (SEKEDNGVQS…VRPGVKESLV (66 aa)) is disordered. Over residues 1801–1812 (TEVTAPSSSDTA) the composition is skewed to polar residues. Pro residues predominate over residues 1814–1826 (TPPPPSPPPPSSP).

The protein belongs to the sodium channel (TC 1.A.1.10) family. Nav1.4/SCN4A subfamily. The Nav1.4 voltage-gated sodium channel consists of an ion-conducting alpha subunit SCN4A which is functional on its own and a regulatory beta subunit SCN1B. SCN1B strongly enhances the presence of SCN4A at the cell surface. SCN1B is also required for rapid channel inactivation and recovery after inactivation. It prevents the decrease of channel activity in response to repetitive, high-frequency depolarizations. Interacts with the syntrophins SNTA1, SNTB1 and SNTB2 (via PDZ domain); probably links SCN4A to the actin cytoskeleton and the extracellular matrix via the dystrophin-associated protein complex and regulates its localization in muscle cells. Interacts with TMEM233; probable regulator of the channel. In terms of tissue distribution, detected in quadriceps muscle (at protein level). Detected in hind-limb skeletal muscles, but not in heart or brain. Detected at low levels in the myocardium. According to Pubme=26427606 detected also in brain.

The protein localises to the cell membrane. It carries out the reaction Na(+)(in) = Na(+)(out). Its activity is regulated as follows. The channel is inhibited by tetrodotoxin. Pore-forming subunit of Nav1.4, a voltage-gated sodium (Nav) channel that directly mediates the depolarizing phase of action potentials in excitable membranes. Navs, also called VGSCs (voltage-gated sodium channels) or VDSCs (voltage-dependent sodium channels), operate by switching between closed and open conformations depending on the voltage difference across the membrane. In the open conformation they allow Na(+) ions to selectively pass through the pore, along their electrochemical gradient. The influx of Na+ ions provokes membrane depolarization, initiating the propagation of electrical signals throughout cells and tissues. Highly expressed in skeletal muscles, Nav1.4 generates the action potential crucial for muscle contraction. The protein is Sodium channel protein type 4 subunit alpha of Mus musculus (Mouse).